The sequence spans 299 residues: ATP phosphoribosyltransferase (299 aa).

It belongs to the ATP phosphoribosyltransferase family. Long subfamily. In terms of assembly, equilibrium between an active dimeric form, an inactive hexameric form and higher aggregates. Interconversion between the various forms is largely reversible and is influenced by the natural substrates and inhibitors of the enzyme. Requires Mg(2+) as cofactor.

It localises to the cytoplasm. The catalysed reaction is 1-(5-phospho-beta-D-ribosyl)-ATP + diphosphate = 5-phospho-alpha-D-ribose 1-diphosphate + ATP. It participates in amino-acid biosynthesis; L-histidine biosynthesis; L-histidine from 5-phospho-alpha-D-ribose 1-diphosphate: step 1/9. With respect to regulation, feedback inhibited by histidine. In terms of biological role, catalyzes the condensation of ATP and 5-phosphoribose 1-diphosphate to form N'-(5'-phosphoribosyl)-ATP (PR-ATP). Has a crucial role in the pathway because the rate of histidine biosynthesis seems to be controlled primarily by regulation of HisG enzymatic activity. The chain is ATP phosphoribosyltransferase from Buchnera aphidicola subsp. Diuraphis noxia.